We begin with the raw amino-acid sequence, 375 residues long: MSCPVIELTQQLIRRPSLSPDDAGCQALLIERLQAIGFTVERMDFADTQNFWAWRGQGETLAFAGHTDVVPPGDADRWINPPFEPTIRDGMLFGRGAADMKGSLAAMVVAAERFVAQHPNHTGRLAFLITSDEEASAHNGTVKAVEALMARNERLDYCLVGEPSSIEVVGDVVKNGRRGSLTCNLTIHGVQGHVAYPHLADNPVHRAAPFLNELVAIEWDQGNEFFPATSMQIANIQAGTGSNNVIPGELFVQFNFRFSTELTDEMIKAQVLALLEKHQLRYTVDWWLSGQPFLTARGKLVDAVVNAVEHYNEIKPQLLTTGGTSDGRFIARMGAQVVELGPVNATIHKINECVNAADLQLLARMYQRIMEQLVA.

Residue H66 coordinates Zn(2+). D68 is a catalytic residue. D99 is a binding site for Zn(2+). E133 (proton acceptor) is an active-site residue. Positions 134, 162, and 348 each coordinate Zn(2+).

This sequence belongs to the peptidase M20A family. DapE subfamily. Homodimer. The cofactor is Zn(2+). Co(2+) serves as cofactor.

It catalyses the reaction N-succinyl-(2S,6S)-2,6-diaminopimelate + H2O = (2S,6S)-2,6-diaminopimelate + succinate. Its pathway is amino-acid biosynthesis; L-lysine biosynthesis via DAP pathway; LL-2,6-diaminopimelate from (S)-tetrahydrodipicolinate (succinylase route): step 3/3. Functionally, catalyzes the hydrolysis of N-succinyl-L,L-diaminopimelic acid (SDAP), forming succinate and LL-2,6-diaminopimelate (DAP), an intermediate involved in the bacterial biosynthesis of lysine and meso-diaminopimelic acid, an essential component of bacterial cell walls. The protein is Succinyl-diaminopimelate desuccinylase of Escherichia coli O157:H7.